Consider the following 209-residue polypeptide: Uracil phosphoribosyltransferase (209 aa).

5-phospho-alpha-D-ribose 1-diphosphate contacts are provided by residues arginine 79, arginine 104, and 131–139 (DPMLATGGS). Uracil contacts are provided by residues valine 194 and 199-201 (GDA). Aspartate 200 lines the 5-phospho-alpha-D-ribose 1-diphosphate pocket.

It belongs to the UPRTase family. Mg(2+) is required as a cofactor.

The enzyme catalyses UMP + diphosphate = 5-phospho-alpha-D-ribose 1-diphosphate + uracil. It participates in pyrimidine metabolism; UMP biosynthesis via salvage pathway; UMP from uracil: step 1/1. With respect to regulation, allosterically activated by GTP. Functionally, catalyzes the conversion of uracil and 5-phospho-alpha-D-ribose 1-diphosphate (PRPP) to UMP and diphosphate. The polypeptide is Uracil phosphoribosyltransferase (Bacillus mycoides (strain KBAB4) (Bacillus weihenstephanensis)).